The following is a 156-amino-acid chain: Putative NrdI-like protein (156 aa).

This sequence belongs to the NrdI family.

The polypeptide is Putative NrdI-like protein (Streptococcus pneumoniae serotype 4 (strain ATCC BAA-334 / TIGR4)).